The chain runs to 1082 residues: Neisserial autotransporter lipoprotein NalP (1082 aa).

An N-terminal signal peptide occupies residues 1-27; sequence MRTTPTFPTKTFKPTAMALAVATTLSA. The N-palmitoyl cysteine moiety is linked to residue Cys-28. Cys-28 carries S-diacylglycerol cysteine lipidation. The Peptidase S8 domain maps to 110-482; the sequence is NDAYKNLINL…WGLLDAGKAM (373 aa). Active-site charge relay system residues include Asp-138, His-210, and Ser-426. Positions 808 to 1082 constitute an Autotransporter domain; that stretch reads DGLDHNGTGL…SGRVGVGYRF (275 aa).

The protein belongs to the peptidase S8 family. Probably auto-processes to yield a 68-70 kDa form and a C-terminal 30 kDa translocator domain; upon overexpression in situ and in E.coli full-length protein is seen as well as (probably) auto-processed forms of 68-70 kDa and 30 kDa in size, suggesting this may have protease activity.

Its subcellular location is the cell outer membrane. The protein resides in the cell surface. The protein localises to the secreted. It is found in the host cytoplasm. It localises to the host perinuclear region. Its activity is regulated as follows. Cleavage of host complement factor C3 is inhibited by PMSF. In terms of biological role, major human immunogenic protein, detected in patients recovering from meningitidis. Autotransporter with a secreted protease domain involved in processing other autotransporter proteins including App, IgA, LbpB and NHBA. Probably autoprocesses to release the about 70 kDa passenger domain. Both cell surface protein (Neisserial autotransporter lipoprotein NalP) and the passenger domain cleave human (host) complement factor C3, generating a shorter alpha chain and a longer beta chain than normal. Uptake of a passenger domain fragment (residues 101-784) by human cells increases cell metabolic activity; the serine protease activity is required for this increase. Cleaves human (host) complement factor C3, generating a shorter alpha chain and a longer beta chain than normal. Does not act on mouse or rabbit C3. Cleavage causes C3b degradation by human CFI and CFH, and thus decreases deposition of C3b on the bacteria surface and probably facilitates complement escape. Its function is as follows. Plays a role in extracellular-DNA (eDNA) mediated biofilm formation. In some strains (including cc32 strain MC58) eDNA stimulates biofilm formation. When NalP is not expressed (and no longer processes NHBA or IgA) biofilm formation increases. The polypeptide is Neisserial autotransporter lipoprotein NalP (Neisseria meningitidis serogroup B (strain ATCC BAA-335 / MC58)).